The sequence spans 623 residues: MNALKRLGTTLAKNGDQIIEGTKELDQISVKYFLGNTRVSNNEKSLVSISSNKSRLNFNQLIKDNAHLIGKGSQYQRKVVKHYLSPLIGHKLRRQDIHNDYNKQLSHTDHIITPTDRKREAFSSMELAVDILPLLIKSTKKPVTKPAKRRLFKPYYTKEVPPIPDFKGDMKLFEDYIALLTHTKFLYKNSSSSNGIIPKILRVLIHPSNLNTIDLRSVQCYNDILYFYSKKYDFATCRELFAQMKVEGCKPNTTTYNILLLNLVKKVHMRKIRSIKNELLFYLRNMQKNGIFCDTVTWNTCYNFLNDEMSRDLYIEKLIDCGVPLTSELVYSVVRNSSKAHISTKTKYILDMFGEDGESFVNLKFVNLLISDLVLDHNVERAWSVLRYFELKQLKFVNQPKFLINSETMNTFLRYFAEQGRIDLCFLTYNYFVKDLVGPNKIRPNVNTFDMLMKSLVKNGYTETLPTVFEVICALSERYGIKIRNDGYWSLKCKAIIKFQYKSSSCEKNKTELLNKLNNFSWGKQLPLFTTKVWKNGNSEVRKICRMLGSIPIPLRKSRKLGDKETVDRSQNRSVSEKKKAYRNRIKYIAIGNAMARRIPYANNWHQSFKDEVTKRGLLASER.

5 PPR repeats span residues 217–251 (SVQC…GCKP), 252–292 (NTTT…NGIF), 362–396 (NLKF…QLKF), 405–439 (NSET…LVGP), and 445–479 (NVNT…SERY).

Its subcellular location is the mitochondrion inner membrane. Required for respiration. The protein is ATPase expression protein 3 (AEP3) of Candida glabrata (strain ATCC 2001 / BCRC 20586 / JCM 3761 / NBRC 0622 / NRRL Y-65 / CBS 138) (Yeast).